A 397-amino-acid chain; its full sequence is tRNA pseudouridine synthase D (397 aa).

The Nucleophile role is filled by D76. The 211-residue stretch at 151-361 (GVPNFFGEQR…MEGERRPLRV (211 aa)) folds into the TRUD domain.

It belongs to the pseudouridine synthase TruD family.

The catalysed reaction is uridine(13) in tRNA = pseudouridine(13) in tRNA. Responsible for synthesis of pseudouridine from uracil-13 in transfer RNAs. This is tRNA pseudouridine synthase D from Geotalea daltonii (strain DSM 22248 / JCM 15807 / FRC-32) (Geobacter daltonii).